A 544-amino-acid polypeptide reads, in one-letter code: Cytochrome P450 monooxygenase verL (544 aa).

Residues 3–23 form a helical membrane-spanning segment; it reads VALFPILPIGCLLIYIIFKLW. Position 446 (C446) interacts with heme. A disordered region spans residues 520 to 544; that stretch reads QEKGIDGWKGKKESSSEENRGVSSR.

Belongs to the cytochrome P450 family. It depends on heme as a cofactor.

It localises to the membrane. It participates in mycotoxin biosynthesis. Cytochrome P450 monooxygenase; part of the gene cluster that mediates the biosynthesis of 11'-deoxyverticillin A, one of the dimeric epipolythiodioxopiperazines (ETPs) from the verticillin family that act as mycotoxins. 11'-deoxyverticillin A is required for normal conidiation. The nonribosomal peptide synthetase verP is speculated to be responsible for condensation of amino acids to form the carbon skeleton of verticillin, whereas the cluster-specific tailoring enzymes are involved in further modifications leading to the production of 11'-deoxyverticillin A. This Clonostachys rogersoniana protein is Cytochrome P450 monooxygenase verL.